Here is a 334-residue protein sequence, read N- to C-terminus: Leucine-rich repeat-containing protein 39 (334 aa).

LRR repeat units lie at residues 59-82 (EDGRIILRIEKEEWKTLPSSLLKL), 83-105 (NQLQEWQLHRTGLLKIPEFIGRF), 106-128 (QHLIVLDLSRNTISEIPRGIGLL), 129-151 (TRLQELILSYNKIKTVPKELSNC), 153-175 (SLEKLELAVNRDISDLPTELSKL), 176-198 (LKLTHLDLSMNQFTTIPLAVLDM), 199-221 (PALEWLDMGSNSLQQLPDTLDRM), 223-244 (SLHTLWLQRNEITCLPETIRNM), 245-269 (KNLGTLVLSNNKLQDIPGCMEEMTS), and 272-295 (FVNFRDNPLRLEVTLPPSDDVDGE).

As to quaternary structure, interacts with MYH7 (via C-terminus). Expressed in heart and skeletal muscle (at protein level). Also detected in kidney (at protein level). Not detected in other tissues tested (at protein level).

The protein resides in the cytoplasm. It localises to the myofibril. Its subcellular location is the sarcomere. The protein localises to the m line. In terms of biological role, component of the sarcomeric M-band which plays a role in myocyte response to biomechanical stress. May regulate expression of other M-band proteins via an SRF-dependent pathway. Important for normal contractile function in heart. The polypeptide is Leucine-rich repeat-containing protein 39 (Rattus norvegicus (Rat)).